The following is a 160-amino-acid chain: Cytochrome b6-f complex subunit 4 (160 aa).

3 helical membrane-spanning segments follow: residues 36 to 56, 95 to 115, and 128 to 148; these read LLYIFPVVILGTIACVVGLAV, LLGIALQTLIPLGLMILPFIE, and IAMSVFLFGTFLTIYLGIGAC.

Belongs to the cytochrome b family. PetD subfamily. As to quaternary structure, the 4 large subunits of the cytochrome b6-f complex are cytochrome b6, subunit IV (17 kDa polypeptide, PetD), cytochrome f and the Rieske protein, while the 4 small subunits are PetG, PetL, PetM and PetN. The complex functions as a dimer.

It is found in the cellular thylakoid membrane. Its function is as follows. Component of the cytochrome b6-f complex, which mediates electron transfer between photosystem II (PSII) and photosystem I (PSI), cyclic electron flow around PSI, and state transitions. The polypeptide is Cytochrome b6-f complex subunit 4 (Prochlorococcus marinus (strain MIT 9301)).